A 1059-amino-acid polypeptide reads, in one-letter code: RNA-binding protein 26 (1059 aa).

Basic and acidic residues-rich tracts occupy residues 98-114 and 130-147; these read EKEIKKDEVNKEEEKEK and RHKDTRENRKRSNSDRES. Residues 98–275 form a disordered region; that stretch reads EKEIKKDEVN…PVDNSYASGS (178 aa). Polar residues predominate over residues 172-182; the sequence is LNSNKVQNAKN. Basic and acidic residues predominate over residues 184–213; it reads RSRDDRKRDDRFRKREYDRNVPRRDSYRDR. The segment covering 214 to 231 has biased composition (basic residues); it reads YNRRRGRSRSYSRSRSRS. Over residues 232–266 the composition is skewed to basic and acidic residues; that stretch reads WSKERQRDRDRSRSRTRSRDKDSGKPKFDLDRPDP. Residues 327–355 form a C3H1-type zinc finger; the sequence is QMQKKRCRDYDEKGFCMRGDMCPFDHGSD. A compositionally biased stretch (pro residues) spans 375–428; it reads PVLEGPPPPGLPPPPSLLTPPPVNLQPPPVPPPGPLPPSLPPVTGPPPPLPPLQ. Residues 375-443 are disordered; sequence PVLEGPPPPG…APPNSATSSV (69 aa). A compositionally biased stretch (low complexity) spans 434–443; that stretch reads APPNSATSSV. The RRM 1 domain occupies 581 to 655; the sequence is TKLELRRIPP…RFIRMYWHRE (75 aa). Residues 771–873 are a coiled coil; sequence GDAQKKKQEA…LLDTELDLYN (103 aa). The RRM 2 domain maps to 942–1011; sequence RALKISGFTE…QDLKLAWNKP (70 aa). Residues 1010-1059 are disordered; that stretch reads KPVPNASSTEVEDADQEEEEFHEDSIVDDSLLQDDDEEEEDDNESRSWRR. Composition is skewed to acidic residues over residues 1019–1031 and 1040–1052; these read EVEDADQEEEEFH and LLQDDDEEEEDDN.

May be involved in the turnover of nuclear polyadenylated (pA+) RNA. In Xenopus laevis (African clawed frog), this protein is RNA-binding protein 26.